The following is a 298-amino-acid chain: S-adenosylmethionine-dependent nucleotide dehydratase (298 aa).

The Radical SAM core domain occupies Ala-8–Glu-235. Residues Cys-22, Cys-26, and Cys-29 each contribute to the [4Fe-4S] cluster site.

Belongs to the radical SAM superfamily. Viperin family. Requires [4Fe-4S] cluster as cofactor.

The catalysed reaction is CTP + AH2 + S-adenosyl-L-methionine = 3'-deoxy-3',4'-didehydro-CTP + 5'-deoxyadenosine + L-methionine + A + H2O + H(+). The enzyme catalyses UTP + AH2 + S-adenosyl-L-methionine = 3'-deoxy-3',4'-didehydro-UTP + 5'-deoxyadenosine + L-methionine + A + H2O + H(+). Its function is as follows. Expression of pVip8 in E.coli (strain MG1655) confers resistance to phages lambda, P1, SECphi8 and T7. Prevents culture collapse upon infection with T7. Catalyzes the conversion of cytidine triphosphate (CTP) to 3'-deoxy-3',4'-didehydro-CTP (ddhCTP) and uridine triphosphate (UTP) to 3'-deoxy-3',4'-didehydro-UTP (ddhUTP), probably via a SAM-dependent radical mechanism. The modified nucleotides repress transcription from T7 RNA polymerase-directed genes (possibly by acting as chain terminators), strongly suggesting these nucleotides block viral polymerase transcription. The chain is S-adenosylmethionine-dependent nucleotide dehydratase from Psychrobacter lutiphocae (strain DSM 21542 / CCUG 56590 / IMMIB L-1110).